We begin with the raw amino-acid sequence, 47 residues long: MAKGKRTFQPNNRRRSRVHGFRSRMSTRAGRAIVSARRRKGRKSLTA.

Composition is skewed to basic residues over residues 1–22 (MAKGKRTFQPNNRRRSRVHGFR) and 36–47 (ARRRKGRKSLTA). The segment at 1–47 (MAKGKRTFQPNNRRRSRVHGFRSRMSTRAGRAIVSARRRKGRKSLTA) is disordered.

It belongs to the bacterial ribosomal protein bL34 family.

The protein is Large ribosomal subunit protein bL34 of Corynebacterium kroppenstedtii (strain DSM 44385 / JCM 11950 / CIP 105744 / CCUG 35717).